The chain runs to 827 residues: Multiple RNA-binding domain-containing protein 1 (827 aa).

The RRM 1 domain maps to serine 5–proline 78. Disordered regions lie at residues lysine 77–alanine 116, alanine 176–aspartate 230, and alanine 256–serine 299. Positions glutamate 179–aspartate 189 are enriched in acidic residues. Composition is skewed to low complexity over residues alanine 208 to leucine 225 and alanine 256 to valine 270. Over residues lysine 277 to glutamate 288 the composition is skewed to basic and acidic residues. RRM domains are found at residues serine 308–alanine 384, threonine 489–lysine 560, serine 599–arginine 682, and threonine 704–alanine 781.

It belongs to the RRM MRD1 family.

It is found in the nucleus. Involved in pre-rRNA processing. The protein is Multiple RNA-binding domain-containing protein 1 (mrd-1) of Neurospora crassa (strain ATCC 24698 / 74-OR23-1A / CBS 708.71 / DSM 1257 / FGSC 987).